Here is a 653-residue protein sequence, read N- to C-terminus: Protein SCARECROW (653 aa).

Disordered stretches follow at residues 1–69 (MAES…RRVS) and 193–265 (PSSS…AVQT). Low complexity predominate over residues 17–31 (PLRTTSSGSSSSNNR). Positions 32 to 41 (GPPPPPPPPL) are enriched in pro residues. The segment covering 51–63 (EMSSNPDYNNSSR) has biased composition (polar residues). Residues 209–230 (QISNNPSPPQQQQQHQQQQQQH) are compositionally biased toward low complexity. Residues 246–265 (STDAPPQPETVTATVPAVQT) show a composition bias toward polar residues. One can recognise a GRAS domain in the interval 281–650 (QKQDEEGLHL…LSLLTASAWT (370 aa)). The interval 288 to 351 (LHLLTLLLQC…LLNSCLGIYA (64 aa)) is leucine repeat I (LRI). Positions 295 to 299 (LQCAE) match the LxCxE motif motif. The VHIID stretch occupies residues 370–435 (FQVFNGISPL…GGPPHVRLTG (66 aa)). The VHIID motif lies at 401–405 (VHIID). The segment at 445-477 (ATGKRLSDFADKLGLPFEFCPLAEKVGNLDTER) is leucine repeat II (LRII). Residues 486–573 (VAVHWLQHSL…QQLLSKEIRN (88 aa)) form a PFYRE region. The tract at residues 576–650 (AVGGPSRSGE…LSLLTASAWT (75 aa)) is SAW.

Belongs to the GRAS family. As to quaternary structure, interacts with SHR, JKD and MGP. Interacts with SIEL. Interacts with RBR1 through its the LxCxE motif. As to expression, expressed in siliques, leaves and roots. Detected in the initial daughter cell before its asymmetric division and remains expressed only in the endodermal cell layer after the division. Expressed in the endodermis or starch sheath of the seedling hypocotyl, in the leaf bundle sheath cells and the root quiescent center.

The protein resides in the nucleus. Functionally, transcription factor required for quiescent center cells specification and maintenance of surrounding stem cells, and for the asymmetric cell division involved in radial pattern formation in roots. Essential for cell division but not differentiation of the ground tissue. Also required for normal shoot gravitropism. Regulates the radial organization of the shoot axial organs. Binds to the promoter of MGP, NUC, RLK and SCL3. Restricts SHR movment and sequesters it into the nucleus of the endodermis. The sequence is that of Protein SCARECROW from Arabidopsis thaliana (Mouse-ear cress).